The following is a 525-amino-acid chain: GMP synthase [glutamine-hydrolyzing] (525 aa).

The Glutamine amidotransferase type-1 domain maps to 9–207 (RILILDFGSQ…VRDICQCEAL (199 aa)). Residue C86 is the Nucleophile of the active site. Catalysis depends on residues H181 and E183. One can recognise a GMPS ATP-PPase domain in the interval 208–400 (WTPAKIIDDA…LGLPYDMLYR (193 aa)). Residue 235–241 (SGGVDSS) coordinates ATP.

As to quaternary structure, homodimer.

It carries out the reaction XMP + L-glutamine + ATP + H2O = GMP + L-glutamate + AMP + diphosphate + 2 H(+). It functions in the pathway purine metabolism; GMP biosynthesis; GMP from XMP (L-Gln route): step 1/1. In terms of biological role, catalyzes the synthesis of GMP from XMP. In Klebsiella pneumoniae (strain 342), this protein is GMP synthase [glutamine-hydrolyzing].